We begin with the raw amino-acid sequence, 70 residues long: Protein SlyX homolog (70 aa).

This sequence belongs to the SlyX family.

In Shewanella sediminis (strain HAW-EB3), this protein is Protein SlyX homolog.